A 447-amino-acid chain; its full sequence is Glutamyl-tRNA reductase (447 aa).

Substrate contacts are provided by residues 56-59 (TCNR), Ser119, 124-126 (ETQ), and Gln130. Residue Cys57 is the Nucleophile of the active site. 201-206 (GLGEMS) serves as a coordination point for NADP(+).

This sequence belongs to the glutamyl-tRNA reductase family. As to quaternary structure, homodimer.

The enzyme catalyses (S)-4-amino-5-oxopentanoate + tRNA(Glu) + NADP(+) = L-glutamyl-tRNA(Glu) + NADPH + H(+). The protein operates within porphyrin-containing compound metabolism; protoporphyrin-IX biosynthesis; 5-aminolevulinate from L-glutamyl-tRNA(Glu): step 1/2. Functionally, catalyzes the NADPH-dependent reduction of glutamyl-tRNA(Glu) to glutamate 1-semialdehyde (GSA). This is Glutamyl-tRNA reductase from Helicobacter acinonychis (strain Sheeba).